The primary structure comprises 954 residues: Glycine dehydrogenase (decarboxylating) (954 aa).

The residue at position 702 (lysine 702) is an N6-(pyridoxal phosphate)lysine.

This sequence belongs to the GcvP family. As to quaternary structure, the glycine cleavage system is composed of four proteins: P, T, L and H. Pyridoxal 5'-phosphate is required as a cofactor.

It catalyses the reaction N(6)-[(R)-lipoyl]-L-lysyl-[glycine-cleavage complex H protein] + glycine + H(+) = N(6)-[(R)-S(8)-aminomethyldihydrolipoyl]-L-lysyl-[glycine-cleavage complex H protein] + CO2. The glycine cleavage system catalyzes the degradation of glycine. The P protein binds the alpha-amino group of glycine through its pyridoxal phosphate cofactor; CO(2) is released and the remaining methylamine moiety is then transferred to the lipoamide cofactor of the H protein. This is Glycine dehydrogenase (decarboxylating) from Xanthomonas euvesicatoria pv. vesicatoria (strain 85-10) (Xanthomonas campestris pv. vesicatoria).